Here is a 152-residue protein sequence, read N- to C-terminus: Psoriasis susceptibility 1 candidate gene 1 protein homolog (152 aa).

A compositionally biased stretch (polar residues) spans 1-31 (MTCTDQKSHSQRALGTQTPALQGPQLLNTDP). 2 disordered regions span residues 1–39 (MTCTDQKSHSQRALGTQTPALQGPQLLNTDPSSEETRPP) and 132–152 (APTLLYSPPPSHSPFGLSSLI).

The sequence is that of Psoriasis susceptibility 1 candidate gene 1 protein homolog (PSORS1C1) from Pan troglodytes (Chimpanzee).